The chain runs to 637 residues: BUD13 homolog (637 aa).

The segment at 18–53 (SGTDAGLEGGPEAGRKRRKKRPKPGGAGGKGMRIVD) is disordered. Lys65 is covalently cross-linked (Glycyl lysine isopeptide (Lys-Gly) (interchain with G-Cter in SUMO2)). Residues 104–470 (LLGGHGEDGH…KKQDQDTTDL (367 aa)) form a disordered region. A compositionally biased stretch (basic and acidic residues) spans 108–119 (HGEDGHFHHDDQ). Thr131 carries the post-translational modification Phosphothreonine. Ser135 is subject to Phosphoserine. Thr144 is modified (phosphothreonine). Ser148 bears the Phosphoserine mark. Thr157 bears the Phosphothreonine mark. Phosphoserine is present on Ser161. Thr170 bears the Phosphothreonine mark. Position 174 is a phosphoserine (Ser174). At Thr183 the chain carries Phosphothreonine. Residue Ser187 is modified to Phosphoserine. Thr196 and Thr209 each carry phosphothreonine. Position 213 is a phosphoserine (Ser213). Thr222 carries the post-translational modification Phosphothreonine. Ser226, Ser238, Ser259, Ser264, Ser272, Ser284, Ser285, and Ser297 each carry phosphoserine. A compositionally biased stretch (polar residues) spans 260 to 275 (LGTSSPRQTHNHSPTA). The span at 295 to 315 (HESPDLELHKAKSSKAAERAP) shows a compositional bias: basic and acidic residues. Polar residues predominate over residues 318–335 (AASQSGLGPSHPSLSTNS). Residues Ser341 and Ser344 each carry the phosphoserine modification. Residues 353-362 (AHFEAKKQLD) are compositionally biased toward basic and acidic residues. A phosphoserine mark is found at Ser371, Ser373, Ser376, Ser410, and Ser426. Positions 430 to 439 (RSPRPGKKTA) are enriched in basic residues. Basic and acidic residues predominate over residues 453–465 (VQREHQELKKQDQ). Residues 490 to 538 (NLKLERLEQRRKAEKDSERDELYAQWGKGLAQSRQQQQNVEDAMKEMQK) are a coiled coil. Phosphotyrosine is present on Tyr512. The interval 553–595 (LREQEREGDPMANFIKKNKAKENKNKKVKPRYSGPAPPPNRFN) is disordered. Ser585 carries the phosphoserine modification.

The protein belongs to the CWC26 family. Part of the activated spliceosome B/catalytic step 1 spliceosome, one of the forms of the spliceosome which has a well-formed active site but still cannot catalyze the branching reaction and is composed of at least 52 proteins, the U2, U5 and U6 snRNAs and the pre-mRNA. Component of the minor spliceosome, which splices U12-type introns.

It is found in the nucleus. Its function is as follows. Involved in pre-mRNA splicing as component of the activated spliceosome. As a component of the minor spliceosome, involved in the splicing of U12-type introns in pre-mRNAs. In Mus musculus (Mouse), this protein is BUD13 homolog (Bud13).